Consider the following 412-residue polypeptide: Acyl-[acyl-carrier-protein] hydrolase FATB3, chloroplastic (412 aa).

A compositionally biased stretch (low complexity) spans 1–25 (MVAAAASSAFFSFPTPGTSPKPGKF). The N-terminal 50 residues, 1-50 (MVAAAASSAFFSFPTPGTSPKPGKFGNWPSSLSIPFNPKSNHNGGIQVKA), are a transit peptide targeting the chloroplast. The interval 1 to 63 (MVAAAASSAF…AHPKANGSAV (63 aa)) is disordered. Residues 28–44 (WPSSLSIPFNPKSNHNG) are compositionally biased toward polar residues. Active-site residues include Asn-310, His-312, and Cys-347. Positions 393–412 (NAGATGAVSTGKTSNGNSVS) are disordered. Residues 399 to 412 (AVSTGKTSNGNSVS) are compositionally biased toward polar residues.

It belongs to the acyl-ACP thioesterase family.

It localises to the plastid. The protein resides in the chloroplast. The catalysed reaction is tetradecanoyl-[ACP] + H2O = tetradecanoate + holo-[ACP] + H(+). Its function is as follows. Plays an essential role in chain termination during de novo fatty acid synthesis. Possesses thioesterase activity for medium chain acyl-ACPs. Main substrate is 14:0. The polypeptide is Acyl-[acyl-carrier-protein] hydrolase FATB3, chloroplastic (Cuphea viscosissima (Blue waxweed)).